Consider the following 194-residue polypeptide: ATP-dependent Clp protease proteolytic subunit (194 aa).

The Nucleophile role is filled by Ser98. Residue His123 is part of the active site.

It belongs to the peptidase S14 family. Fourteen ClpP subunits assemble into 2 heptameric rings which stack back to back to give a disk-like structure with a central cavity, resembling the structure of eukaryotic proteasomes.

Its subcellular location is the cytoplasm. The catalysed reaction is Hydrolysis of proteins to small peptides in the presence of ATP and magnesium. alpha-casein is the usual test substrate. In the absence of ATP, only oligopeptides shorter than five residues are hydrolyzed (such as succinyl-Leu-Tyr-|-NHMec, and Leu-Tyr-Leu-|-Tyr-Trp, in which cleavage of the -Tyr-|-Leu- and -Tyr-|-Trp bonds also occurs).. Cleaves peptides in various proteins in a process that requires ATP hydrolysis. Has a chymotrypsin-like activity. Plays a major role in the degradation of misfolded proteins. This chain is ATP-dependent Clp protease proteolytic subunit, found in Clostridium botulinum (strain Loch Maree / Type A3).